Consider the following 281-residue polypeptide: Acetylglutamate kinase (281 aa).

Residues 64–65 (GG), Arg-86, and Asn-179 each bind substrate.

This sequence belongs to the acetylglutamate kinase family. ArgB subfamily.

The protein resides in the cytoplasm. It catalyses the reaction N-acetyl-L-glutamate + ATP = N-acetyl-L-glutamyl 5-phosphate + ADP. The protein operates within amino-acid biosynthesis; L-arginine biosynthesis; N(2)-acetyl-L-ornithine from L-glutamate: step 2/4. Catalyzes the ATP-dependent phosphorylation of N-acetyl-L-glutamate. The polypeptide is Acetylglutamate kinase (Campylobacter curvus (strain 525.92)).